Here is a 551-residue protein sequence, read N- to C-terminus: Periplasmic [NiFe] hydrogenase large subunit (551 aa).

Ni(2+) contacts are provided by cysteine 65, cysteine 68, cysteine 530, and cysteine 533. Positions 537-551 are excised as a propeptide; it reads VIDPESNQVHKFRIL.

It belongs to the [NiFe]/[NiFeSe] hydrogenase large subunit family. Heterodimer of a large and a small subunit. Ni(2+) serves as cofactor.

It localises to the periplasm. The enzyme catalyses 2 Fe(III)-[cytochrome c3] + H2 = 2 Fe(II)-[cytochrome c3] + 2 H(+). The chain is Periplasmic [NiFe] hydrogenase large subunit (hydB) from Megalodesulfovibrio gigas (Desulfovibrio gigas).